Reading from the N-terminus, the 193-residue chain is ECF RNA polymerase sigma factor SigK (193 aa).

The interval 35–101 (LYDRTRSRVY…RRAVDRVRSE (67 aa)) is sigma-70 factor domain-2. The short motif at 59–62 (ETTQ) is the Polymerase core binding element. Residues 140–187 (MGSLSDLQREAIQLAYYEGLTYVQVSERLSANLATIKSRMRDGIRGLK) are sigma-70 factor domain-4. The H-T-H motif DNA-binding region spans 161-180 (YVQVSERLSANLATIKSRMR).

This sequence belongs to the sigma-70 factor family. ECF subfamily. Interacts transiently with the RNA polymerase catalytic core formed by RpoA, RpoB, RpoC and RpoZ (2 alpha, 1 beta, 1 beta' and 1 omega subunit) to form the RNA polymerase holoenzyme that can initiate transcription. Interacts (via sigma-70 factor domain 4) with anti-sigma-K factor RskA.

Sigma factors are initiation factors that promote the attachment of RNA polymerase to specific initiation sites and are then released. Extracytoplasmic function (ECF) sigma factors are held in an inactive form by an anti-sigma factor until released by regulated intramembrane proteolysis. This Mycobacterium sp. (strain JLS) protein is ECF RNA polymerase sigma factor SigK (sigK).